A 239-amino-acid chain; its full sequence is Adapter protein MecA (239 aa).

Over residues 118–128 (EQRTKEKEAQG) the composition is skewed to basic and acidic residues. Residues 118-137 (EQRTKEKEAQGSKRQKSSAR) form a disordered region.

The protein belongs to the MecA family. As to quaternary structure, homodimer.

In terms of biological role, enables the recognition and targeting of unfolded and aggregated proteins to the ClpC protease or to other proteins involved in proteolysis. The chain is Adapter protein MecA from Staphylococcus aureus (strain bovine RF122 / ET3-1).